A 98-amino-acid chain; its full sequence is Small ribosomal subunit protein bS20 (98 aa).

It belongs to the bacterial ribosomal protein bS20 family.

Its function is as follows. Binds directly to 16S ribosomal RNA. The chain is Small ribosomal subunit protein bS20 from Synechococcus sp. (strain CC9902).